A 121-amino-acid polypeptide reads, in one-letter code: Small ribosomal subunit protein bS16 (121 aa).

Residues 85–110 show a composition bias toward basic and acidic residues; it reads REARNNPKKAEPGKKAQERAAERAAK. The disordered stretch occupies residues 85-121; sequence REARNNPKKAEPGKKAQERAAERAAKAAEASEAASAE. Over residues 111–121 the composition is skewed to low complexity; it reads AAEASEAASAE.

This sequence belongs to the bacterial ribosomal protein bS16 family.

This is Small ribosomal subunit protein bS16 from Azorhizobium caulinodans (strain ATCC 43989 / DSM 5975 / JCM 20966 / LMG 6465 / NBRC 14845 / NCIMB 13405 / ORS 571).